The chain runs to 395 residues: Succinyl-diaminopimelate desuccinylase (395 aa).

His74 serves as a coordination point for Zn(2+). The active site involves Asp76. Asp107 provides a ligand contact to Zn(2+). Glu141 functions as the Proton acceptor in the catalytic mechanism. Zn(2+) is bound by residues Glu142, Glu170, and His368.

The protein belongs to the peptidase M20A family. DapE subfamily. In terms of assembly, homodimer. It depends on Zn(2+) as a cofactor. Requires Co(2+) as cofactor.

It catalyses the reaction N-succinyl-(2S,6S)-2,6-diaminopimelate + H2O = (2S,6S)-2,6-diaminopimelate + succinate. It participates in amino-acid biosynthesis; L-lysine biosynthesis via DAP pathway; LL-2,6-diaminopimelate from (S)-tetrahydrodipicolinate (succinylase route): step 3/3. Catalyzes the hydrolysis of N-succinyl-L,L-diaminopimelic acid (SDAP), forming succinate and LL-2,6-diaminopimelate (DAP), an intermediate involved in the bacterial biosynthesis of lysine and meso-diaminopimelic acid, an essential component of bacterial cell walls. The polypeptide is Succinyl-diaminopimelate desuccinylase (Brucella anthropi (strain ATCC 49188 / DSM 6882 / CCUG 24695 / JCM 21032 / LMG 3331 / NBRC 15819 / NCTC 12168 / Alc 37) (Ochrobactrum anthropi)).